The primary structure comprises 194 residues: Archaetidylinositol phosphate synthase (194 aa).

2 consecutive transmembrane segments (helical) span residues 32–51 (IYTL…WLYI) and 58–78 (LLIA…RFTG). Positions 67, 70, 88, and 92 each coordinate Mg(2+). Catalysis depends on Asp92, which acts as the Proton acceptor. 3 consecutive transmembrane segments (helical) span residues 103 to 123 (LYIA…GLIV), 150 to 170 (IAIL…LALA), and 172 to 192 (AAAV…AGEL).

The protein belongs to the CDP-alcohol phosphatidyltransferase class-I family. The cofactor is Mn(2+). Mg(2+) is required as a cofactor.

The protein localises to the cell membrane. It catalyses the reaction CDP-2,3-bis-O-(phytanyl)-sn-glycerol + 1D-myo-inositol 3-phosphate = saturated 1-archaetidyl-1D-myo-inositol 3-phosphate + CMP + H(+). The protein operates within lipid metabolism; phospholipid metabolism. Its function is as follows. Catalyzes the formation of archaetidylinositol phosphate (AIP) from CDP-archaeol (CDP-ArOH or CDP-2,3-bis-(O-phytanyl)-sn-glycerol) and 1L-myo-inositol 1-phosphate (IP or 1D-myo-inositol 3-phosphate). AIP is a precursor of archaetidyl-myo-inositol (AI), an ether-type inositol phospholipid ubiquitously distributed in archaea membranes and essential for glycolipid biosynthesis in archaea. This chain is Archaetidylinositol phosphate synthase, found in Aeropyrum pernix (strain ATCC 700893 / DSM 11879 / JCM 9820 / NBRC 100138 / K1).